The primary structure comprises 417 residues: MSLSNKLTLDKLNVKGKRVVMRVDFNVPMKNNQITNNQRIKAAVPSIKFCLDNGAKSVVLMSHLGRPDVGPMPDKYSLQPVAVELKSLLGKDVLFLKDCVGPEVEKACADPAAGSVILLENLRFHVEEEGKGKDASGNKVKAEPAKIETFRASLSKLGDVYVNDAFGTAHRAHSSMVGVNLPQKAGGFLMKKELNYFAKALESPERPFLAILGGAKVADKIQLINNMLDKVNEMIIGGGMAFTFLKVLNNMEIGTSLFDEEGAKIVKNLMSKAEKNGVKITLPVDFVTADKFDENAKTGQATVASGIPAGWMGLDCGTESSKKYAEAVARAKQIVWNGPVGVFEWEAFARGTKALMDEVVKATSRGCITIIGGGDTATCCAKWNTEDKVSHVSTGGGASLELLEGKVLPGVDALSNV.

Residue serine 2 is modified to N-acetylserine. A phosphoserine mark is found at serine 2 and serine 4. Positions 2–186 (SLSNKLTLDK…VGVNLPQKAG (185 aa)) are globular domain-1. An N6-succinyllysine modification is found at lysine 6. Position 11 is an N6-acetyllysine (lysine 11). Positions 23, 24, 25, 26, 38, and 39 each coordinate (2R)-3-phosphoglycerate. A mitochondrial targeting region exposed following cis-trans isomerization by PIN1 and recognized by the TOM complex for mitochondrial translocation of the protein region spans residues 38 to 43 (QRIKAA). At lysine 48 the chain carries N6-acetyllysine; alternate. At lysine 48 the chain carries N6-succinyllysine; alternate. The (2R)-3-phosphoglycerate site is built by serine 62, histidine 63, glycine 65, and arginine 66. Lysine 75 carries the N6-acetyllysine modification. Tyrosine 76 is modified (phosphotyrosine). An N6-acetyllysine mark is found at lysine 86 and lysine 91. Lysine 97 bears the N6-acetyllysine; alternate mark. Lysine 97 is subject to N6-(2-hydroxyisobutyryl)lysine; alternate. Positions 122 and 123 each coordinate (2R)-3-phosphoglycerate. Lysine 131 bears the N6-acetyllysine; alternate mark. Lysine 131 carries the N6-malonyllysine; alternate modification. Residue lysine 146 is modified to N6-acetyllysine. The (2R)-3-phosphoglycerate site is built by histidine 170 and arginine 171. Positions 187–190 (GFLM) are linker. Lysine 191 carries the post-translational modification N6-succinyllysine. The globular domain-2 stretch occupies residues 191–417 (KKELNYFAKA…LPGVDALSNV (227 aa)). At tyrosine 196 the chain carries Phosphotyrosine. Lysine 199 is subject to N6-acetyllysine. Serine 203 bears the Phosphoserine mark. Position 214 (glycine 214) interacts with ADP. Glycine 214 provides a ligand contact to CDP. Positions 215 and 216 each coordinate AMP. Residue alanine 215 coordinates ATP. A Mg(2+)-binding site is contributed by alanine 215. Position 216 is an N6-(2-hydroxyisobutyryl)lysine (lysine 216). The Mg(2+) site is built by alanine 218 and aspartate 219. Aspartate 219 serves as a coordination point for CDP. Lysine 220 provides a ligand contact to AMP. Position 220 (lysine 220) interacts with ATP. Lysine 220 is modified (N6-(2-hydroxyisobutyryl)lysine). Glycine 238 contributes to the ADP binding site. Glycine 238 provides a ligand contact to CDP. Glycine 239 lines the AMP pocket. ATP is bound at residue glycine 239. An N6-acetyllysine mark is found at lysine 267 and lysine 291. Glycine 313 provides a ligand contact to AMP. Glycine 313 is an ATP binding site. Lysine 323 is modified (N6-(2-hydroxyisobutyryl)lysine). Residues glycine 338, valine 340, and phenylalanine 343 each contribute to the CDP site. Position 343 (phenylalanine 343) interacts with ADP. Glutamate 344 contacts AMP. Glutamate 344 contributes to the ATP binding site. An N6-acetyllysine modification is found at lysine 361. ATP is bound by residues aspartate 375 and threonine 376. Aspartate 375 lines the Mg(2+) pocket. The segment at 406–417 (KVLPGVDALSNV) is associated with globular domain 1.

Belongs to the phosphoglycerate kinase family. In terms of assembly, monomer. Interacts with kinase MAPK1/ERK2; the interaction is direct, occurs under hypoxic conditions, and promotes its interaction with PIN1. Interacts with peptidyl-prolyl cis-trans isomerase PIN1; the interaction is direct, occurs under hypoxic conditions, and targets the protein to the mitochondrion by promoting interactions with the TOM complex. Interacts with mitochondrial circRNA mcPGK1 (via its 2nd stem-loop); the interaction is direct and targets the protein to the mitochondrion by promoting interactions with the TOM complex. Interacts with pyruvate dehydrogenase kinase PDK1; the interaction is direct, occurs under hypoxic conditions and leads to PDK1-mediated inhibition of pyruvate dehydrogenase complex activity. Requires Mg(2+) as cofactor. Post-translationally, phosphorylated at Ser-203 by MAPK1/ERK2 under hypoxic conditions, which promotes its mitochondrial targeting.

It is found in the cytoplasm. The protein localises to the cytosol. It localises to the mitochondrion matrix. It catalyses the reaction (2R)-3-phosphoglycerate + ATP = (2R)-3-phospho-glyceroyl phosphate + ADP. It carries out the reaction L-seryl-[protein] + ATP = O-phospho-L-seryl-[protein] + ADP + H(+). It participates in carbohydrate degradation; glycolysis; pyruvate from D-glyceraldehyde 3-phosphate: step 2/5. Catalyzes one of the two ATP producing reactions in the glycolytic pathway via the reversible conversion of 1,3-diphosphoglycerate to 3-phosphoglycerate. Both L- and D- forms of purine and pyrimidine nucleotides can be used as substrates, but the activity is much lower on pyrimidines. In addition to its role as a glycolytic enzyme, it seems that PGK-1 acts as a polymerase alpha cofactor protein (primer recognition protein). Acts as a protein kinase when localized to the mitochondrion where it phosphorylates pyruvate dehydrogenase kinase PDK1 to inhibit pyruvate dehydrogenase complex activity and suppress the formation of acetyl-coenzyme A from pyruvate, and consequently inhibit oxidative phosphorylation and promote glycolysis. May play a role in sperm motility. This is Phosphoglycerate kinase 1 (PGK1) from Equus caballus (Horse).